Reading from the N-terminus, the 243-residue chain is Probable intron-encoded endonuclease aI3 (243 aa).

Belongs to the LAGLIDADG endonuclease family.

The protein localises to the mitochondrion. Mitochondrial DNA endonuclease involved in intron homing. The polypeptide is Probable intron-encoded endonuclease aI3 (aI3) (Dictyostelium citrinum (Slime mold)).